The chain runs to 114 residues: MGSMIEINFSHDYFKLREQRFTTIRSKHYLKNKGLRVGDVVKIKHPSGEFPAKIVGVEVKRICDIPLEILKKDAEFEGFNIKTHQDFVDLLNSFIPYKSNKLTTEKAIIYLERV.

This is an uncharacterized protein from Methanocaldococcus jannaschii (strain ATCC 43067 / DSM 2661 / JAL-1 / JCM 10045 / NBRC 100440) (Methanococcus jannaschii).